The primary structure comprises 278 residues: MANFKGHALPGSFFLIVGLWWSVKYPLKYFHHKGLKNNRLSRQQERIEIIEGAVKTLFAIIGILAEQFVPDGPHLHLYHENQWVKLMNWQHSTMYLFFGVSGLMDMITYLYFHIVPLGLDRVVLAMAVFIEGFLFYFHVHNRPPLDQHIHSLLLFGLFGAAVSISLEVILRDNIVLELFRTSLLILQGTWFWQIGFVLFPPFGRPEWDQKDMDNIMFITMCFCWHYLVALCIVAINYSLVYCFLTRVKRRAEGEIIGIQKLKSDHTYQSALLSGSDEE.

Transmembrane regions (helical) follow at residues 7–27 (HALPGSFFLIVGLWWSVKYPL), 49–69 (IIEGAVKTLFAIIGILAEQFV), 95–115 (YLFFGVSGLMDMITYLYFHIV), 117–137 (LGLDRVVLAMAVFIEGFLFYF), 149–169 (IHSLLLFGLFGAAVSISLEVI), 183–203 (LLILQGTWFWQIGFVLFPPFG), and 215–235 (IMFITMCFCWHYLVALCIVAI). Phosphoserine occurs at positions 273 and 275.

It belongs to the TMEM45 family.

The protein resides in the endosome membrane. Its subcellular location is the lysosome membrane. The protein localises to the golgi apparatus. It is found in the trans-Golgi network membrane. Plays a role in innate immunity. This is Transmembrane protein 45B (Tmem45b) from Mus musculus (Mouse).